A 149-amino-acid chain; its full sequence is Myosin light chain 1 (149 aa).

3 consecutive EF-hand domains span residues 2 to 37 (SATRANKDIFTLFDKKGQGAIAKDSLGDYLRAIGYN), 81 to 116 (AKTEDFVKAFQVFDKESTGKVSVGDLRYMLTGLGEK), and 117 to 149 (LTDAEVDELLKGVEVDSNGEIDYKKFIEDVLRQ). Ca(2+) is bound by residues Asp-15, Asp-94, Thr-98, Lys-100, and Asp-105. A Glycyl lysine isopeptide (Lys-Gly) (interchain with G-Cter in ubiquitin) cross-link involves residue Lys-116. Ca(2+) is bound by residues Asp-123, Lys-127, and Asp-132.

Interacts with MYO1, MYO2 and IQG1 by binding to their IQ domains. Interacts with SEC4.

Its subcellular location is the bud neck. It localises to the bud tip. Functionally, essential light chain for the class II conventional myosin MYO1. Also acts as light chain for the class V unconventional myosin MYO2 and for IQG1. Involved in the assembly of the contractile actomyosin ring at the bud neck during cytokinesis by recruiting IQG1 to the bud neck. Also required for chitin and MYO2-dependent secretory vesicle deposition to the center of the bud neck for septum formation. May stabilize MYO2 by binding to its IQ domains. Its major function is probably not to regulate MYO1 activity, but rather to coordinate actin ring formation and targeted membrane deposition during cytokinesis via its interactions with MYO1, IQG1 and MYO2. This is Myosin light chain 1 (MLC1) from Saccharomyces cerevisiae (strain ATCC 204508 / S288c) (Baker's yeast).